Reading from the N-terminus, the 430-residue chain is Adenylosuccinate synthetase (430 aa).

Residues 12–18 (GDEGKGK) and 40–42 (GHT) each bind GTP. Catalysis depends on aspartate 13, which acts as the Proton acceptor. The Mg(2+) site is built by aspartate 13 and glycine 40. Residues 13 to 16 (DEGK), 38 to 41 (NAGH), threonine 129, arginine 143, glutamine 224, threonine 239, and arginine 303 contribute to the IMP site. Residue histidine 41 is the Proton donor of the active site. 299–305 (TVSNRKR) contributes to the substrate binding site. GTP is bound by residues arginine 305, 331-333 (KLD), and 413-415 (STG).

Belongs to the adenylosuccinate synthetase family. In terms of assembly, homodimer. It depends on Mg(2+) as a cofactor.

It localises to the cytoplasm. It carries out the reaction IMP + L-aspartate + GTP = N(6)-(1,2-dicarboxyethyl)-AMP + GDP + phosphate + 2 H(+). Its pathway is purine metabolism; AMP biosynthesis via de novo pathway; AMP from IMP: step 1/2. Functionally, plays an important role in the de novo pathway of purine nucleotide biosynthesis. Catalyzes the first committed step in the biosynthesis of AMP from IMP. The chain is Adenylosuccinate synthetase from Ehrlichia chaffeensis (strain ATCC CRL-10679 / Arkansas).